The following is a 177-amino-acid chain: Large ribosomal subunit protein uL6 (177 aa).

It belongs to the universal ribosomal protein uL6 family. As to quaternary structure, part of the 50S ribosomal subunit.

In terms of biological role, this protein binds to the 23S rRNA, and is important in its secondary structure. It is located near the subunit interface in the base of the L7/L12 stalk, and near the tRNA binding site of the peptidyltransferase center. In Acinetobacter baumannii (strain AB307-0294), this protein is Large ribosomal subunit protein uL6.